A 153-amino-acid chain; its full sequence is ATP synthase subunit b' (153 aa).

A helical membrane pass occupies residues 20–40; that stretch reads TLPLMAVQVVLLTFILNALFF.

Belongs to the ATPase B chain family. F-type ATPases have 2 components, F(1) - the catalytic core - and F(0) - the membrane proton channel. F(1) has five subunits: alpha(3), beta(3), gamma(1), delta(1), epsilon(1). F(0) has four main subunits: a(1), b(1), b'(1) and c(10-14). The alpha and beta chains form an alternating ring which encloses part of the gamma chain. F(1) is attached to F(0) by a central stalk formed by the gamma and epsilon chains, while a peripheral stalk is formed by the delta, b and b' chains.

It is found in the cellular thylakoid membrane. F(1)F(0) ATP synthase produces ATP from ADP in the presence of a proton or sodium gradient. F-type ATPases consist of two structural domains, F(1) containing the extramembraneous catalytic core and F(0) containing the membrane proton channel, linked together by a central stalk and a peripheral stalk. During catalysis, ATP synthesis in the catalytic domain of F(1) is coupled via a rotary mechanism of the central stalk subunits to proton translocation. Functionally, component of the F(0) channel, it forms part of the peripheral stalk, linking F(1) to F(0). The b'-subunit is a diverged and duplicated form of b found in plants and photosynthetic bacteria. The sequence is that of ATP synthase subunit b' from Prochlorococcus marinus (strain MIT 9211).